Reading from the N-terminus, the 513-residue chain is ATP synthase subunit alpha (513 aa).

Position 169–176 (169–176) interacts with ATP; sequence GDRQTGKT.

The protein belongs to the ATPase alpha/beta chains family. As to quaternary structure, F-type ATPases have 2 components, CF(1) - the catalytic core - and CF(0) - the membrane proton channel. CF(1) has five subunits: alpha(3), beta(3), gamma(1), delta(1), epsilon(1). CF(0) has three main subunits: a(1), b(2) and c(9-12). The alpha and beta chains form an alternating ring which encloses part of the gamma chain. CF(1) is attached to CF(0) by a central stalk formed by the gamma and epsilon chains, while a peripheral stalk is formed by the delta and b chains.

The protein resides in the cell inner membrane. It carries out the reaction ATP + H2O + 4 H(+)(in) = ADP + phosphate + 5 H(+)(out). Its function is as follows. Produces ATP from ADP in the presence of a proton gradient across the membrane. The alpha chain is a regulatory subunit. The chain is ATP synthase subunit alpha from Ruthia magnifica subsp. Calyptogena magnifica.